Here is a 284-residue protein sequence, read N- to C-terminus: MELWYTEEQTQHVRLSFKVKEHLFSEQSEFQKVDVLDTYEFGKLMTLDGLVMVTEKDEFIYHDMIVHVPMAVNPNIKNVLIIGGGDGGTARELMRYQSIKHVDMVEIDKMVCDVARDYFPTISSELENPRVSLYYEDGVAFIKDKENKYDLIIIDSTDPVGPGEGLFSQEFYTNCFKALTEQGILVNQNESPVYEQFAREAIRANSKLKKIFPIVEVYQAQIPTYPSGYWLFGFASKSLHPVKDLKSSVWNQLNLNTKYYNTQLHVGAFALPSYVKEQIENGNV.

In terms of domain architecture, PABS spans 2–237 (ELWYTEEQTQ…GYWLFGFASK (236 aa)). Gln-31 lines the S-methyl-5'-thioadenosine pocket. Spermidine-binding residues include His-62 and Asp-86. Residues Glu-106 and 137-138 (DG) contribute to the S-methyl-5'-thioadenosine site. The active-site Proton acceptor is the Asp-155. 155–158 (DSTD) is a binding site for spermidine. An S-methyl-5'-thioadenosine-binding site is contributed by Pro-162.

It belongs to the spermidine/spermine synthase family. Homodimer or homotetramer.

It is found in the cytoplasm. The catalysed reaction is S-adenosyl 3-(methylsulfanyl)propylamine + putrescine = S-methyl-5'-thioadenosine + spermidine + H(+). Its pathway is amine and polyamine biosynthesis; spermidine biosynthesis; spermidine from putrescine: step 1/1. Catalyzes the irreversible transfer of a propylamine group from the amino donor S-adenosylmethioninamine (decarboxy-AdoMet) to putrescine (1,4-diaminobutane) to yield spermidine. In Alkaliphilus metalliredigens (strain QYMF), this protein is Polyamine aminopropyltransferase.